A 393-amino-acid chain; its full sequence is Iripin-5 (393 aa).

The first 16 residues, 1 to 16 (MKTLIVLMCSLVVVWA), serve as a signal peptide directing secretion. 2 N-linked (GlcNAc...) asparagine glycosylation sites follow: N198 and N245.

Belongs to the serpin family. In terms of tissue distribution, highly expressed in female salivary gland during blood feeding. Expressed in female midgut and ovary during blood feeding.

The protein localises to the secreted. Functionally, serine protease inhibitor that modulates blood feeding of ticks on vertebrate species. Inhibits host neutrophil elastase (ELANE) and proteinase 3/myeloblastin (PRTN3). Moderately inhibits host chymase, cathepsin G (CTSG), trypsin and alpha-chymotrypsin. Decreases host neutrophil migration. Decreases nitric oxide production by host macrophages. Decreases host complement activity. The polypeptide is Iripin-5 (Ixodes ricinus (Common tick)).